The following is a 145-amino-acid chain: Large ribosomal subunit protein uL24 (145 aa).

Disordered regions lie at residues 1–21 (MKFN…HFNA) and 122–145 (KAKS…KMQE). Lys-136 participates in a covalent cross-link: Glycyl lysine isopeptide (Lys-Gly) (interchain with G-Cter in SUMO2). The residue at position 139 (Thr-139) is a Phosphothreonine.

The protein belongs to the universal ribosomal protein uL24 family. In terms of assembly, component of the large ribosomal subunit. Interacts with DHX33. In terms of processing, ufmylated by UFL1 in response to endoplasmic reticulum stress, promoting reticulophagy of endoplasmic reticulum sheets.

The protein resides in the cytoplasm. Functionally, component of the large ribosomal subunit. The ribosome is a large ribonucleoprotein complex responsible for the synthesis of proteins in the cell. The polypeptide is Large ribosomal subunit protein uL24 (RPL26) (Bos taurus (Bovine)).